The sequence spans 684 residues: Leishmanolysin-like peptidase (684 aa).

His257 is a Zn(2+) binding site. Glu258 is an active-site residue. Residues His261 and His364 each coordinate Zn(2+).

It belongs to the peptidase M8 family. Requires Zn(2+) as cofactor.

The protein resides in the cytoplasm. Its function is as follows. Essential for the coordination of mitotic progression, and also plays a role in cell migration. The polypeptide is Leishmanolysin-like peptidase (Drosophila pseudoobscura pseudoobscura (Fruit fly)).